The primary structure comprises 239 residues: Sugar fermentation stimulation protein homolog (239 aa).

Belongs to the SfsA family.

This Agrobacterium fabrum (strain C58 / ATCC 33970) (Agrobacterium tumefaciens (strain C58)) protein is Sugar fermentation stimulation protein homolog.